Reading from the N-terminus, the 434-residue chain is Enolase (434 aa).

(2R)-2-phosphoglycerate is bound at residue Gln168. Glu210 serves as the catalytic Proton donor. The Mg(2+) site is built by Asp247, Glu292, and Asp319. (2R)-2-phosphoglycerate contacts are provided by Lys344, Arg373, Ser374, and Lys395. The active-site Proton acceptor is Lys344.

This sequence belongs to the enolase family. It depends on Mg(2+) as a cofactor.

The protein localises to the cytoplasm. Its subcellular location is the secreted. It localises to the cell surface. It carries out the reaction (2R)-2-phosphoglycerate = phosphoenolpyruvate + H2O. The protein operates within carbohydrate degradation; glycolysis; pyruvate from D-glyceraldehyde 3-phosphate: step 4/5. Functionally, catalyzes the reversible conversion of 2-phosphoglycerate (2-PG) into phosphoenolpyruvate (PEP). It is essential for the degradation of carbohydrates via glycolysis. In Endomicrobium trichonymphae, this protein is Enolase.